Reading from the N-terminus, the 267-residue chain is Orotidine 5'-phosphate decarboxylase (267 aa).

Lys-93 (proton donor) is an active-site residue.

The protein belongs to the OMP decarboxylase family. Type 2 subfamily.

It catalyses the reaction orotidine 5'-phosphate + H(+) = UMP + CO2. It functions in the pathway pyrimidine metabolism; UMP biosynthesis via de novo pathway; UMP from orotate: step 2/2. The protein is Orotidine 5'-phosphate decarboxylase of Halobacterium salinarum (strain ATCC 29341 / DSM 671 / R1).